The chain runs to 465 residues: Chromosomal replication initiator protein DnaA (465 aa).

The segment at 1–87 (MLWTDCLTRL…RPGSILSSSE (87 aa)) is domain I, interacts with DnaA modulators. Residues 81 to 123 (SILSSSEQPATTTAALQTAPIPQPAKVKREPEPVANTAVSSKS) form a disordered region. Low complexity predominate over residues 88 to 100 (QPATTTAALQTAP). A domain II region spans residues 88–127 (QPATTTAALQTAPIPQPAKVKREPEPVANTAVSSKSSKKK). The interval 128-345 (LLNPQFTFSL…GALNKVVAIS (218 aa)) is domain III, AAA+ region. ATP-binding residues include glycine 173, glycine 175, lysine 176, and threonine 177. The interval 346 to 465 (RFKGAPIDLD…YKNLLRLLQS (120 aa)) is domain IV, binds dsDNA.

It belongs to the DnaA family. Oligomerizes as a right-handed, spiral filament on DNA at oriC.

It is found in the cytoplasm. Functionally, plays an essential role in the initiation and regulation of chromosomal replication. ATP-DnaA binds to the origin of replication (oriC) to initiate formation of the DNA replication initiation complex once per cell cycle. Binds the DnaA box (a 9 base pair repeat at the origin) and separates the double-stranded (ds)DNA. Forms a right-handed helical filament on oriC DNA; dsDNA binds to the exterior of the filament while single-stranded (ss)DNA is stabiized in the filament's interior. The ATP-DnaA-oriC complex binds and stabilizes one strand of the AT-rich DNA unwinding element (DUE), permitting loading of DNA polymerase. After initiation quickly degrades to an ADP-DnaA complex that is not apt for DNA replication. Binds acidic phospholipids. This is Chromosomal replication initiator protein DnaA from Acinetobacter baumannii (strain ATCC 17978 / DSM 105126 / CIP 53.77 / LMG 1025 / NCDC KC755 / 5377).